Consider the following 62-residue polypeptide: MSKGTPSQGKHNKGSNHIICRRCGRRSYHVRKKACSACGFGASKRLKTFAWKNKKINGQRVR.

Zn(2+) is bound by residues Cys-20, Cys-23, Cys-35, and Cys-38. The segment at 20–38 (CRRCGRRSYHVRKKACSAC) adopts a C4-type zinc-finger fold.

It belongs to the eukaryotic ribosomal protein eL37 family. Zn(2+) is required as a cofactor.

In terms of biological role, binds to the 23S rRNA. This chain is Large ribosomal subunit protein eL37, found in Methanococcus aeolicus (strain ATCC BAA-1280 / DSM 17508 / OCM 812 / Nankai-3).